A 453-amino-acid polypeptide reads, in one-letter code: Na(+)/H(+) antiporter NhaA 2 (453 aa).

Helical transmembrane passes span 32 to 52 (GALL…PGAA), 71 to 91 (LSLA…VAGL), 109 to 129 (AVPI…YVLI), 140 to 160 (GWAI…AVIG), 169 to 189 (VFLL…IAVF), 193 to 213 (NLSV…AILL), 232 to 252 (ALVH…ALVV), 284 to 304 (AVPV…GGLV), 310 to 330 (PVAI…VIAV), 356 to 376 (MLAG…FAAG), and 382 to 402 (HVKI…AVIL). Positions 409–453 (GSRGNDATTRDPDQTRVGTATQRTTPDHPTPAATDANQPARSPAP) are disordered.

The protein belongs to the NhaA Na(+)/H(+) (TC 2.A.33) antiporter family.

It localises to the cell membrane. It catalyses the reaction Na(+)(in) + 2 H(+)(out) = Na(+)(out) + 2 H(+)(in). Its function is as follows. Na(+)/H(+) antiporter that extrudes sodium in exchange for external protons. This is Na(+)/H(+) antiporter NhaA 2 from Salinispora tropica (strain ATCC BAA-916 / DSM 44818 / JCM 13857 / NBRC 105044 / CNB-440).